The following is an 851-amino-acid chain: Glycogen phosphorylase, liver form (851 aa).

Ala2 carries the N-acetylalanine modification. At Ser15 the chain carries Phosphoserine; by PHK; in form phosphorylase a. AMP is bound by residues Asp43–Asn45, Tyr76, and Arg310. Residue Lys364 is modified to N6-succinyllysine. At Lys470 the chain carries N6-acetyllysine. 3 positions are modified to phosphoserine: Ser524, Ser561, and Ser639. Lys681 carries the post-translational modification N6-(pyridoxal phosphate)lysine. Position 796 is an N6-acetyllysine (Lys796).

The protein belongs to the glycogen phosphorylase family. In terms of assembly, homodimer; enzymatically active. Interacts with PPP1R3B; recruits the phosphatase PP1 which dephosphorylates and inactivates PYGL/glycogen phosphorylase. Pyridoxal 5'-phosphate is required as a cofactor. Post-translationally, acetylation, which is up-regulated by glucose and insulin and down-regulated by glucagon, inhibits the glycogen phosphorylase activity by promoting PPP1R3B-mediated recruitment of phosphatase PP1 and Ser-15 dephosphorylation. In terms of processing, phosphorylation at Ser-15 converts inactive phosphorylase b into active phosphorylase a. Dephosphorylation of Ser-15 by phosphatase PP1 inactivates the enzyme.

Its subcellular location is the cytoplasm. The protein localises to the cytosol. The enzyme catalyses [(1-&gt;4)-alpha-D-glucosyl](n) + phosphate = [(1-&gt;4)-alpha-D-glucosyl](n-1) + alpha-D-glucose 1-phosphate. With respect to regulation, allosterically regulated through the non-covalent binding of metabolites, being activated by AMP and inhibited by ATP, ADP, and glucose-6-phosphate. The activity is also controlled by post-translational modifications including phosphorylation and acetylation. Its function is as follows. Allosteric enzyme that catalyzes the rate-limiting step in glycogen catabolism, the phosphorolytic cleavage of glycogen to produce glucose-1-phosphate, and plays a central role in maintaining cellular and organismal glucose homeostasis. The protein is Glycogen phosphorylase, liver form of Ovis aries (Sheep).